A 1401-amino-acid polypeptide reads, in one-letter code: DNA-directed RNA polymerase subunit beta' (1401 aa).

Zn(2+) is bound by residues Cys70, Cys72, Cys85, and Cys88. 3 residues coordinate Mg(2+): Asp460, Asp462, and Asp464. Zn(2+) contacts are provided by Cys814, Cys888, Cys895, and Cys898. A disordered region spans residues 1369–1388 (RQKQKAVEQEGPSAEQATDN).

The protein belongs to the RNA polymerase beta' chain family. As to quaternary structure, the RNAP catalytic core consists of 2 alpha, 1 beta, 1 beta' and 1 omega subunit. When a sigma factor is associated with the core the holoenzyme is formed, which can initiate transcription. Mg(2+) is required as a cofactor. Zn(2+) serves as cofactor.

The enzyme catalyses RNA(n) + a ribonucleoside 5'-triphosphate = RNA(n+1) + diphosphate. DNA-dependent RNA polymerase catalyzes the transcription of DNA into RNA using the four ribonucleoside triphosphates as substrates. The protein is DNA-directed RNA polymerase subunit beta' of Aliivibrio fischeri (strain ATCC 700601 / ES114) (Vibrio fischeri).